Consider the following 365-residue polypeptide: Cytoplasmic tRNA 2-thiolation protein 1 (365 aa).

This sequence belongs to the TtcA family. CTU1/NCS6/ATPBD3 subfamily.

The protein localises to the cytoplasm. It participates in tRNA modification; 5-methoxycarbonylmethyl-2-thiouridine-tRNA biosynthesis. Functionally, plays a central role in 2-thiolation of mcm(5)S(2)U at tRNA wobble positions of tRNA(Lys), tRNA(Glu) and tRNA(Gln). Directly binds tRNAs and probably acts by catalyzing adenylation of tRNAs, an intermediate required for 2-thiolation. It is unclear whether it acts as a sulfurtransferase that transfers sulfur from thiocarboxylated URM1 onto the uridine of tRNAs at wobble position. Prior mcm(5) tRNA modification by the elongator complex is required for 2-thiolation. May also be involved in protein urmylation. This chain is Cytoplasmic tRNA 2-thiolation protein 1, found in Yarrowia lipolytica (strain CLIB 122 / E 150) (Yeast).